The following is a 205-amino-acid chain: Small ribosomal subunit protein uS4 (205 aa).

The segment at 18 to 49 (NIWGRPKSPVNKREYGPGQHGQRRKGKLSDFG) is disordered. One can recognise an S4 RNA-binding domain in the interval 94 to 157 (RRLDAIVYRA…KQLALVLEAN (64 aa)).

This sequence belongs to the universal ribosomal protein uS4 family. In terms of assembly, part of the 30S ribosomal subunit. Contacts protein S5. The interaction surface between S4 and S5 is involved in control of translational fidelity.

One of the primary rRNA binding proteins, it binds directly to 16S rRNA where it nucleates assembly of the body of the 30S subunit. Functionally, with S5 and S12 plays an important role in translational accuracy. The chain is Small ribosomal subunit protein uS4 from Afipia carboxidovorans (strain ATCC 49405 / DSM 1227 / KCTC 32145 / OM5) (Oligotropha carboxidovorans).